The chain runs to 179 residues: Large ribosomal subunit protein uL6 (179 aa).

The protein belongs to the universal ribosomal protein uL6 family. Part of the 50S ribosomal subunit.

Its function is as follows. This protein binds to the 23S rRNA, and is important in its secondary structure. It is located near the subunit interface in the base of the L7/L12 stalk, and near the tRNA binding site of the peptidyltransferase center. This is Large ribosomal subunit protein uL6 from Streptomyces avermitilis (strain ATCC 31267 / DSM 46492 / JCM 5070 / NBRC 14893 / NCIMB 12804 / NRRL 8165 / MA-4680).